A 209-amino-acid chain; its full sequence is Imidazole glycerol phosphate synthase subunit HisH (209 aa).

The Glutamine amidotransferase type-1 domain maps to 1-205 (MIAIIDYGMG…KGVVETWKSS (205 aa)). Cys-79 (nucleophile) is an active-site residue. Residues His-180 and Glu-182 contribute to the active site.

As to quaternary structure, heterodimer of HisH and HisF.

It is found in the cytoplasm. The enzyme catalyses 5-[(5-phospho-1-deoxy-D-ribulos-1-ylimino)methylamino]-1-(5-phospho-beta-D-ribosyl)imidazole-4-carboxamide + L-glutamine = D-erythro-1-(imidazol-4-yl)glycerol 3-phosphate + 5-amino-1-(5-phospho-beta-D-ribosyl)imidazole-4-carboxamide + L-glutamate + H(+). It catalyses the reaction L-glutamine + H2O = L-glutamate + NH4(+). It participates in amino-acid biosynthesis; L-histidine biosynthesis; L-histidine from 5-phospho-alpha-D-ribose 1-diphosphate: step 5/9. IGPS catalyzes the conversion of PRFAR and glutamine to IGP, AICAR and glutamate. The HisH subunit catalyzes the hydrolysis of glutamine to glutamate and ammonia as part of the synthesis of IGP and AICAR. The resulting ammonia molecule is channeled to the active site of HisF. This chain is Imidazole glycerol phosphate synthase subunit HisH, found in Bacillus anthracis (strain CDC 684 / NRRL 3495).